Here is a 146-residue protein sequence, read N- to C-terminus: Hut operon positive regulatory protein (146 aa).

The protein belongs to the HutP family. Homohexamer.

Functionally, antiterminator that binds to cis-acting regulatory sequences on the mRNA in the presence of histidine, thereby suppressing transcription termination and activating the hut operon for histidine utilization. In Bacillus cytotoxicus (strain DSM 22905 / CIP 110041 / 391-98 / NVH 391-98), this protein is Hut operon positive regulatory protein.